Consider the following 1116-residue polypeptide: Auxin response factor 21 (1116 aa).

Positions 132–234 (FCKTLTASDT…QLLLGIRRAN (103 aa)) form a DNA-binding region, TF-B3. The disordered stretch occupies residues 763–812 (KTDDVPSTSTSPSTNSNPVLLQSIPSSSKNQSLTTAGKTSQSSVVLGPTI). Residues 768-780 (PSTSTSPSTNSNP) are compositionally biased toward low complexity. Polar residues predominate over residues 781–806 (VLLQSIPSSSKNQSLTTAGKTSQSSV). Residues 998-1082 (RTYTKVHKRG…RCIRILSPQE (85 aa)) form the PB1 domain.

It belongs to the ARF family. In terms of assembly, homodimers and heterodimers. Expressed in roots, culms, leaves and young panicles.

It is found in the nucleus. Its function is as follows. Auxin response factors (ARFs) are transcriptional factors that bind specifically to the DNA sequence 5'-TGTCTC-3' found in the auxin-responsive promoter elements (AuxREs). In Oryza sativa subsp. japonica (Rice), this protein is Auxin response factor 21 (ARF21).